A 466-amino-acid chain; its full sequence is 3-isopropylmalate dehydratase large subunit (466 aa).

Cysteine 347, cysteine 407, and cysteine 410 together coordinate [4Fe-4S] cluster.

Belongs to the aconitase/IPM isomerase family. LeuC type 1 subfamily. In terms of assembly, heterodimer of LeuC and LeuD. It depends on [4Fe-4S] cluster as a cofactor.

The catalysed reaction is (2R,3S)-3-isopropylmalate = (2S)-2-isopropylmalate. It functions in the pathway amino-acid biosynthesis; L-leucine biosynthesis; L-leucine from 3-methyl-2-oxobutanoate: step 2/4. In terms of biological role, catalyzes the isomerization between 2-isopropylmalate and 3-isopropylmalate, via the formation of 2-isopropylmaleate. The protein is 3-isopropylmalate dehydratase large subunit of Klebsiella pneumoniae (strain 342).